We begin with the raw amino-acid sequence, 498 residues long: Lysine--tRNA ligase (498 aa).

Positions 407 and 414 each coordinate Mg(2+).

Belongs to the class-II aminoacyl-tRNA synthetase family. As to quaternary structure, homodimer. Mg(2+) serves as cofactor.

The protein resides in the cytoplasm. It catalyses the reaction tRNA(Lys) + L-lysine + ATP = L-lysyl-tRNA(Lys) + AMP + diphosphate. This is Lysine--tRNA ligase from Sinorhizobium medicae (strain WSM419) (Ensifer medicae).